The primary structure comprises 235 residues: Proteasome subunit alpha (235 aa).

It belongs to the peptidase T1A family. The 20S proteasome core is composed of 14 alpha and 14 beta subunits that assemble into four stacked heptameric rings, resulting in a barrel-shaped structure. The two inner rings, each composed of seven catalytic beta subunits, are sandwiched by two outer rings, each composed of seven alpha subunits. The catalytic chamber with the active sites is on the inside of the barrel. Has a gated structure, the ends of the cylinder being occluded by the N-termini of the alpha-subunits. Is capped by the proteasome-associated ATPase, ARC.

The protein resides in the cytoplasm. Its pathway is protein degradation; proteasomal Pup-dependent pathway. Its activity is regulated as follows. The formation of the proteasomal ATPase ARC-20S proteasome complex, likely via the docking of the C-termini of ARC into the intersubunit pockets in the alpha-rings, may trigger opening of the gate for substrate entry. Interconversion between the open-gate and close-gate conformations leads to a dynamic regulation of the 20S proteasome proteolysis activity. In terms of biological role, component of the proteasome core, a large protease complex with broad specificity involved in protein degradation. This is Proteasome subunit alpha from Paenarthrobacter aurescens (strain TC1).